The chain runs to 600 residues: Glutamine--fructose-6-phosphate aminotransferase [isomerizing] (600 aa).

Cys-2 acts as the Nucleophile; for GATase activity in catalysis. In terms of domain architecture, Glutamine amidotransferase type-2 spans 2–217; the sequence is CGIVGFIGEQ…DKEIVIVMKE (216 aa). SIS domains are found at residues 283–422 and 452–590; these read IRNA…AKGE and LAKQ…VDKP. Lys-595 (for Fru-6P isomerization activity) is an active-site residue.

Homodimer.

It is found in the cytoplasm. It carries out the reaction D-fructose 6-phosphate + L-glutamine = D-glucosamine 6-phosphate + L-glutamate. Catalyzes the first step in hexosamine metabolism, converting fructose-6P into glucosamine-6P using glutamine as a nitrogen source. The chain is Glutamine--fructose-6-phosphate aminotransferase [isomerizing] from Bacillus thuringiensis subsp. konkukian (strain 97-27).